A 118-amino-acid chain; its full sequence is Large ribosomal subunit protein bL20 (118 aa).

This sequence belongs to the bacterial ribosomal protein bL20 family.

Binds directly to 23S ribosomal RNA and is necessary for the in vitro assembly process of the 50S ribosomal subunit. It is not involved in the protein synthesizing functions of that subunit. The sequence is that of Large ribosomal subunit protein bL20 from Yersinia enterocolitica serotype O:8 / biotype 1B (strain NCTC 13174 / 8081).